Reading from the N-terminus, the 336-residue chain is Biotin synthase (336 aa).

Residues 48–277 form the Radical SAM core domain; the sequence is VFGDEVEFCS…QAELRLCGGR (230 aa). The [4Fe-4S] cluster site is built by Cys-66, Cys-70, and Cys-73. The [2Fe-2S] cluster site is built by Cys-110, Cys-142, Cys-202, and Arg-272.

The protein belongs to the radical SAM superfamily. Biotin synthase family. In terms of assembly, homodimer. [4Fe-4S] cluster serves as cofactor. The cofactor is [2Fe-2S] cluster.

The enzyme catalyses (4R,5S)-dethiobiotin + (sulfur carrier)-SH + 2 reduced [2Fe-2S]-[ferredoxin] + 2 S-adenosyl-L-methionine = (sulfur carrier)-H + biotin + 2 5'-deoxyadenosine + 2 L-methionine + 2 oxidized [2Fe-2S]-[ferredoxin]. Its pathway is cofactor biosynthesis; biotin biosynthesis; biotin from 7,8-diaminononanoate: step 2/2. Catalyzes the conversion of dethiobiotin (DTB) to biotin by the insertion of a sulfur atom into dethiobiotin via a radical-based mechanism. The polypeptide is Biotin synthase (Persephonella marina (strain DSM 14350 / EX-H1)).